A 574-amino-acid chain; its full sequence is 2-succinyl-5-enolpyruvyl-6-hydroxy-3-cyclohexene-1-carboxylate synthase (574 aa).

It belongs to the TPP enzyme family. MenD subfamily. As to quaternary structure, homodimer. The cofactor is Mg(2+). It depends on Mn(2+) as a cofactor. Thiamine diphosphate serves as cofactor.

The enzyme catalyses isochorismate + 2-oxoglutarate + H(+) = 5-enolpyruvoyl-6-hydroxy-2-succinyl-cyclohex-3-ene-1-carboxylate + CO2. The protein operates within quinol/quinone metabolism; 1,4-dihydroxy-2-naphthoate biosynthesis; 1,4-dihydroxy-2-naphthoate from chorismate: step 2/7. It participates in cofactor biosynthesis; phylloquinone biosynthesis. Its function is as follows. Catalyzes the thiamine diphosphate-dependent decarboxylation of 2-oxoglutarate and the subsequent addition of the resulting succinic semialdehyde-thiamine pyrophosphate anion to isochorismate to yield 2-succinyl-5-enolpyruvyl-6-hydroxy-3-cyclohexene-1-carboxylate (SEPHCHC). In Prochlorococcus marinus (strain SARG / CCMP1375 / SS120), this protein is 2-succinyl-5-enolpyruvyl-6-hydroxy-3-cyclohexene-1-carboxylate synthase.